The primary structure comprises 214 residues: Pyridoxine/pyridoxamine 5'-phosphate oxidase (214 aa).

Substrate contacts are provided by residues 9-12 (RKDY) and Lys67. FMN-binding positions include 62–67 (RMVLLK), 77–78 (FT), Arg83, Lys84, and Gln106. Residues Tyr124, Arg128, and Ser132 each coordinate substrate. Residues 141 to 142 (QS) and Trp186 contribute to the FMN site. 192-194 (RLH) lines the substrate pocket. Arg196 is a binding site for FMN.

This sequence belongs to the pyridoxamine 5'-phosphate oxidase family. As to quaternary structure, homodimer. Requires FMN as cofactor.

It carries out the reaction pyridoxamine 5'-phosphate + O2 + H2O = pyridoxal 5'-phosphate + H2O2 + NH4(+). The catalysed reaction is pyridoxine 5'-phosphate + O2 = pyridoxal 5'-phosphate + H2O2. It participates in cofactor metabolism; pyridoxal 5'-phosphate salvage; pyridoxal 5'-phosphate from pyridoxamine 5'-phosphate: step 1/1. It functions in the pathway cofactor metabolism; pyridoxal 5'-phosphate salvage; pyridoxal 5'-phosphate from pyridoxine 5'-phosphate: step 1/1. Catalyzes the oxidation of either pyridoxine 5'-phosphate (PNP) or pyridoxamine 5'-phosphate (PMP) into pyridoxal 5'-phosphate (PLP). The chain is Pyridoxine/pyridoxamine 5'-phosphate oxidase from Trichormus variabilis (strain ATCC 29413 / PCC 7937) (Anabaena variabilis).